Reading from the N-terminus, the 298-residue chain is Ribosomal protein L11 methyltransferase (298 aa).

4 residues coordinate S-adenosyl-L-methionine: threonine 150, glycine 171, aspartate 193, and asparagine 232.

This sequence belongs to the methyltransferase superfamily. PrmA family.

The protein resides in the cytoplasm. It carries out the reaction L-lysyl-[protein] + 3 S-adenosyl-L-methionine = N(6),N(6),N(6)-trimethyl-L-lysyl-[protein] + 3 S-adenosyl-L-homocysteine + 3 H(+). In terms of biological role, methylates ribosomal protein L11. This chain is Ribosomal protein L11 methyltransferase, found in Chromobacterium violaceum (strain ATCC 12472 / DSM 30191 / JCM 1249 / CCUG 213 / NBRC 12614 / NCIMB 9131 / NCTC 9757 / MK).